A 123-amino-acid polypeptide reads, in one-letter code: Putative membrane protein insertion efficiency factor (123 aa).

Residues 1–23 (MGSCGGKHTGKGAPKPYSRNFTD) form a disordered region.

This sequence belongs to the UPF0161 family.

The protein resides in the cell inner membrane. Functionally, could be involved in insertion of integral membrane proteins into the membrane. This is Putative membrane protein insertion efficiency factor from Brucella abortus (strain 2308).